Here is a 336-residue protein sequence, read N- to C-terminus: Large ribosomal subunit protein uL10 (336 aa).

The segment at 305–336 is disordered; that stretch reads AVVATEEAPKAETKKEEKKEEAAPAAGLGLLF. Positions 311-326 are enriched in basic and acidic residues; it reads EAPKAETKKEEKKEEA.

This sequence belongs to the universal ribosomal protein uL10 family. As to quaternary structure, part of the 50S ribosomal subunit. Forms part of the ribosomal stalk which helps the ribosome interact with GTP-bound translation factors. Forms a heptameric L10(L12)2(L12)2(L12)2 complex, where L10 forms an elongated spine to which the L12 dimers bind in a sequential fashion.

In terms of biological role, forms part of the ribosomal stalk, playing a central role in the interaction of the ribosome with GTP-bound translation factors. The protein is Large ribosomal subunit protein uL10 of Methanococcus vannielii (strain ATCC 35089 / DSM 1224 / JCM 13029 / OCM 148 / SB).